The primary structure comprises 188 residues: Protein GrpE (188 aa).

Positions 1 to 22 (MADEQTLDTQNLDANQAPEASG) are disordered.

Belongs to the GrpE family. As to quaternary structure, homodimer.

The protein localises to the cytoplasm. Its function is as follows. Participates actively in the response to hyperosmotic and heat shock by preventing the aggregation of stress-denatured proteins, in association with DnaK and GrpE. It is the nucleotide exchange factor for DnaK and may function as a thermosensor. Unfolded proteins bind initially to DnaJ; upon interaction with the DnaJ-bound protein, DnaK hydrolyzes its bound ATP, resulting in the formation of a stable complex. GrpE releases ADP from DnaK; ATP binding to DnaK triggers the release of the substrate protein, thus completing the reaction cycle. Several rounds of ATP-dependent interactions between DnaJ, DnaK and GrpE are required for fully efficient folding. The chain is Protein GrpE from Pseudomonas fluorescens (strain ATCC BAA-477 / NRRL B-23932 / Pf-5).